The sequence spans 421 residues: NADH-quinone oxidoreductase subunit F (421 aa).

Residue glycine 54–glycine 63 coordinates NAD(+). Glycine 166–serine 213 provides a ligand contact to FMN. [4Fe-4S] cluster-binding residues include cysteine 344, cysteine 347, cysteine 350, and cysteine 390.

This sequence belongs to the complex I 51 kDa subunit family. Requires FMN as cofactor. [4Fe-4S] cluster is required as a cofactor.

It carries out the reaction a quinone + NADH + 5 H(+)(in) = a quinol + NAD(+) + 4 H(+)(out). Functionally, NDH-1 shuttles electrons from NADH, via FMN and iron-sulfur (Fe-S) centers, to quinones in the respiratory chain. Couples the redox reaction to proton translocation (for every two electrons transferred, four hydrogen ions are translocated across the cytoplasmic membrane), and thus conserves the redox energy in a proton gradient. The protein is NADH-quinone oxidoreductase subunit F (nuoF) of Rickettsia rickettsii (strain Sheila Smith).